Reading from the N-terminus, the 234-residue chain is Golgi SNAP receptor complex member 1 (234 aa).

The Cytoplasmic segment spans residues 1 to 212 (MSETWEALRK…MQKIKTKKQK (212 aa)). Residues 54–121 (VTTEIEGLIE…RDNVDQVLQR (68 aa)) adopt a coiled-coil conformation. Residues 213–233 (NTMILAGVISACLIFTIFWII) traverse the membrane as a helical; Anchor for type IV membrane protein segment. Residue N234 is a topological domain, vesicular.

The protein belongs to the GOSR1 family. Component of several multiprotein Golgi SNARE complexes.

It localises to the golgi apparatus membrane. Involved in transport from the ER to the Golgi apparatus as well as in intra-Golgi transport. It belongs to a super-family of proteins called t-SNAREs or soluble NSF (N-ethylmaleimide-sensitive factor) attachment protein receptor. Cooperates with ykt-6 for proper expression of Golgi-resident proteins. Required along with ykt-6 for normal embryonic development, seam cell division or differentiation, and ray formation. In Caenorhabditis briggsae, this protein is Golgi SNAP receptor complex member 1.